The chain runs to 364 residues: Methylthioribose-1-phosphate isomerase (364 aa).

Residues 49–51 (RGA), Arg-89, and Gln-201 contribute to the substrate site. The active-site Proton donor is Asp-242. 252–253 (NK) is a binding site for substrate.

This sequence belongs to the eIF-2B alpha/beta/delta subunits family. MtnA subfamily.

It catalyses the reaction 5-(methylsulfanyl)-alpha-D-ribose 1-phosphate = 5-(methylsulfanyl)-D-ribulose 1-phosphate. It participates in amino-acid biosynthesis; L-methionine biosynthesis via salvage pathway; L-methionine from S-methyl-5-thio-alpha-D-ribose 1-phosphate: step 1/6. Catalyzes the interconversion of methylthioribose-1-phosphate (MTR-1-P) into methylthioribulose-1-phosphate (MTRu-1-P). The polypeptide is Methylthioribose-1-phosphate isomerase (Leptospira interrogans serogroup Icterohaemorrhagiae serovar copenhageni (strain Fiocruz L1-130)).